The sequence spans 176 residues: Probable DNA-directed RNA polymerase subunit delta (176 aa).

One can recognise an HTH HARE-type domain in the interval 14 to 81 (CSMIEVVHSV…GENRWGLRSW (68 aa)). The tract at residues 90–176 (EILPQPKPKK…ETEEEEEEEL (87 aa)) is disordered. A compositionally biased stretch (acidic residues) spans 106-176 (DGFDDYIEED…ETEEEEEEEL (71 aa)).

The protein belongs to the RpoE family. As to quaternary structure, RNAP is composed of a core of 2 alpha, a beta and a beta' subunits. The core is associated with a delta subunit and one of several sigma factors.

In terms of biological role, participates in both the initiation and recycling phases of transcription. In the presence of the delta subunit, RNAP displays an increased specificity of transcription, a decreased affinity for nucleic acids, and an increased efficiency of RNA synthesis because of enhanced recycling. The chain is Probable DNA-directed RNA polymerase subunit delta from Bacillus thuringiensis subsp. konkukian (strain 97-27).